The primary structure comprises 403 residues: MKENSCTACSRRLALFVGAAVLVVGCSSKTDVTLNRDKPLVFFNRQPSDPLTGKVDMAAMNWNDKTYYVGFDAKFGGSIQGKMILDFLASSESSVDRNGDGIIGYVLCIGDVGHNDSKVRTEGIRRALGTWTGSSDPGQAKEGQAVVGGKSYKVVELEGKAMTGTDGSTWNTNSATESMGSWVAKFADKIDLVISNNDGMAMGCLQASNYPRGLPIFGYDANADAVESVGKGELTGTVSQNVDAQAVAVLQIIRNLLDGSSGEDVVANGISRPDAHGNKISAPVQYWEDVKAIMADNSEVTSANWKEYTRGARDAGVRQVSAPTKKVLLTVHNASNDFLASAYLPALKHYAPLLNVDLTVVQGDGQNELSCLDKFTNLDMFDAFAVNMVKTNSGADYTDKLKY.

The N-terminal stretch at 1–25 is a signal peptide; the sequence is MKENSCTACSRRLALFVGAAVLVVG. Residue cysteine 26 is the site of N-palmitoyl cysteine attachment. Cysteine 26 carries the S-diacylglycerol cysteine lipid modification.

Belongs to the bacterial solute-binding protein 2 family.

The protein resides in the cell membrane. May be involved in the transport of sugars. May have a role in chemotaxis. This Treponema pallidum (strain Nichols) protein is Glucose/galactose-binding lipoprotein (mglB).